Here is a 285-residue protein sequence, read N- to C-terminus: Nurim (285 aa).

At 1-16 (MSANVQVSGQLSSGPS) the chain is on the nuclear side. A helical membrane pass occupies residues 17–44 (LPACIVLSAVSLLCFVAGFGTGAEFVRF). Residues 45–74 (LSFGAIFRNISGGLDGEIPLTWSEAIRNTQ) are Perinuclear space-facing. The chain crosses the membrane as a helical span at residues 75-96 (FQCCIGIDIGLLFLFVLQHSLM). Topologically, residues 97 to 113 (AWTAVKKNVLHVFGVLQ) are nuclear. Residues 114 to 130 (RSIYILCTALSLQVLMR) form a helical membrane-spanning segment. At 131–149 (FWQPCPHGPYLWNVSSDPW) the chain is on the perinuclear space side. Residues 150-180 (SAWLPLLCALVHTISWLLIFSVLLIFDYAEL) traverse the membrane as a helical segment. The Nuclear portion of the chain corresponds to 181–207 (MGIKQVYYFCLGMGDPLSHKSPRVARL). A helical transmembrane segment spans residues 208 to 226 (YAHLRHPIYLELLLILWAV). The Perinuclear space portion of the chain corresponds to 227 to 232 (PCLPPD). The chain crosses the membrane as a helical span at residues 233 to 250 (RLILAIFFTLYLSLVHRL). Residues 251-285 (DVQDYAYLRSQLEKKFLLFSREEASAVGGQIRKNN) lie on the Nuclear side of the membrane.

This sequence belongs to the nurim family.

It localises to the nucleus inner membrane. The sequence is that of Nurim (nrm) from Xenopus laevis (African clawed frog).